The sequence spans 103 residues: Small ribosomal subunit protein uS10 (103 aa).

This sequence belongs to the universal ribosomal protein uS10 family. Part of the 30S ribosomal subunit.

Involved in the binding of tRNA to the ribosomes. The protein is Small ribosomal subunit protein uS10 of Acinetobacter baylyi (strain ATCC 33305 / BD413 / ADP1).